The sequence spans 403 residues: Non-structural maintenance of chromosomes element 4 homolog A (403 aa).

The span at Met1–Glu45 shows a compositional bias: basic and acidic residues. 3 disordered regions span residues Met1 to Ser57, Leu194 to Thr226, and Ser342 to Ser403. A compositionally biased stretch (basic residues) spans Gln196–Thr206. The span at Ser342–Ala353 shows a compositional bias: low complexity. Residues Asp354–Pro363 are compositionally biased toward polar residues. A compositionally biased stretch (basic and acidic residues) spans Thr384–Arg393. Residues Arg394–Ser403 show a composition bias toward basic residues.

The protein belongs to the NSE4 family. In terms of assembly, interacts with SMC5, SMC6A or SMC6B. The SMC5-SMC6 complex is composed of the SMC5 and SMC6 heterodimer attached via their hinge domain and from the non-SMC subunit NSE4A or NSE4B. As to expression, expressed in seedlings, rosette leaves and floral buds.

It is found in the nucleus. In terms of biological role, component of the SMC5-SMC6 complex, that promotes sister chromatid alignment after DNA damage and facilitates double-stranded DNA breaks (DSBs) repair via homologous recombination between sister chromatids. The sequence is that of Non-structural maintenance of chromosomes element 4 homolog A (NSE4A) from Arabidopsis thaliana (Mouse-ear cress).